The following is a 561-amino-acid chain: uncharacterized protein (561 aa).

6 helical membrane passes run 10-29 (LLRN…GYWI), 34-56 (FGSL…SQIG), 63-80 (LKTV…FQSG), 95-117 (VLMA…RMFH), 122-144 (LAAG…SSAL), and 164-186 (GYAV…ILPW). RCK C-terminal domains follow at residues 205 to 287 (QGMA…LLGE) and 294 to 376 (HDMD…ELGS). Transmembrane regions (helical) follow at residues 386-403 (LVFH…GLIV), 407-429 (GSIP…FGWY), 442-464 (AAST…LQTG), 479-501 (FMLG…RYVL), and 538-560 (SFAI…VVAF).

Belongs to the AAE transporter (TC 2.A.81) family.

The protein localises to the cell membrane. This is an uncharacterized protein from Zymomonas mobilis subsp. mobilis (strain ATCC 31821 / ZM4 / CP4).